A 966-amino-acid polypeptide reads, in one-letter code: Phosphoenolpyruvate carboxylase, housekeeping isozyme (966 aa).

Ser11 carries the post-translational modification Phosphoserine. Residues His172 and Lys601 contribute to the active site.

This sequence belongs to the PEPCase type 1 family. In terms of assembly, homotetramer. Mg(2+) serves as cofactor.

It is found in the cytoplasm. It catalyses the reaction oxaloacetate + phosphate = phosphoenolpyruvate + hydrogencarbonate. By light-reversible phosphorylation. Functionally, through the carboxylation of phosphoenolpyruvate (PEP) it forms oxaloacetate, a four-carbon dicarboxylic acid source for the tricarboxylic acid cycle. The sequence is that of Phosphoenolpyruvate carboxylase, housekeeping isozyme from Saccharum hybrid (Sugarcane).